The primary structure comprises 383 residues: Putative F-box protein At3g22650 (383 aa).

Positions 3-50 (SCERSLLPIDIIEEICCRIPVEYLTQFKLTCKQWFALLKDKRFIYKYL) constitute an F-box domain.

This Arabidopsis thaliana (Mouse-ear cress) protein is Putative F-box protein At3g22650.